The sequence spans 928 residues: Periplasmic nitrate reductase (928 aa).

A signal peptide (tat-type signal) is located at residues 1–33; that stretch reads MAFSRREFLKSAAAASAASAVGMSVPSQLLAQA. The 4Fe-4S Mo/W bis-MGD-type domain occupies 40–96; the sequence is WRWDKSVCRFCGTGCGIMVATKNDQIVAVKGDPAAPVNRGLNCIKGYFNAKIMYGAD. [4Fe-4S] cluster-binding residues include C47, C50, C54, and C82. Mo-bis(molybdopterin guanine dinucleotide)-binding positions include K84, Q152, N177, C181, 214–221, 265–267, M422, Q426, N532, 557–558, K580, D607, and 818–827; these read WGANMAEM, QTD, SD, and TGRVLEHWHS. W894 serves as a coordination point for substrate. N902 and K919 together coordinate Mo-bis(molybdopterin guanine dinucleotide).

It belongs to the prokaryotic molybdopterin-containing oxidoreductase family. NasA/NapA/NarB subfamily. As to quaternary structure, component of the periplasmic nitrate reductase NapAB complex composed of NapA and NapB. [4Fe-4S] cluster serves as cofactor. Requires Mo-bis(molybdopterin guanine dinucleotide) as cofactor. Post-translationally, predicted to be exported by the Tat system. The position of the signal peptide cleavage has not been experimentally proven.

The protein resides in the periplasm. The catalysed reaction is 2 Fe(II)-[cytochrome] + nitrate + 2 H(+) = 2 Fe(III)-[cytochrome] + nitrite + H2O. In terms of biological role, catalytic subunit of the periplasmic nitrate reductase complex NapAB. Receives electrons from NapB and catalyzes the reduction of nitrate to nitrite. This is Periplasmic nitrate reductase from Wolinella succinogenes (strain ATCC 29543 / DSM 1740 / CCUG 13145 / JCM 31913 / LMG 7466 / NCTC 11488 / FDC 602W) (Vibrio succinogenes).